The following is a 145-amino-acid chain: D-aminoacyl-tRNA deacylase (145 aa).

The short motif at 137–138 is the Gly-cisPro motif, important for rejection of L-amino acids element; sequence GP.

This sequence belongs to the DTD family. Homodimer.

The protein localises to the cytoplasm. The enzyme catalyses glycyl-tRNA(Ala) + H2O = tRNA(Ala) + glycine + H(+). The catalysed reaction is a D-aminoacyl-tRNA + H2O = a tRNA + a D-alpha-amino acid + H(+). In terms of biological role, an aminoacyl-tRNA editing enzyme that deacylates mischarged D-aminoacyl-tRNAs. Also deacylates mischarged glycyl-tRNA(Ala), protecting cells against glycine mischarging by AlaRS. Acts via tRNA-based rather than protein-based catalysis; rejects L-amino acids rather than detecting D-amino acids in the active site. By recycling D-aminoacyl-tRNA to D-amino acids and free tRNA molecules, this enzyme counteracts the toxicity associated with the formation of D-aminoacyl-tRNA entities in vivo and helps enforce protein L-homochirality. This chain is D-aminoacyl-tRNA deacylase, found in Citrobacter koseri (strain ATCC BAA-895 / CDC 4225-83 / SGSC4696).